We begin with the raw amino-acid sequence, 348 residues long: Uroporphyrinogen decarboxylase (348 aa).

Residues 27–31 (RQAGR), phenylalanine 46, aspartate 76, tyrosine 152, serine 207, and histidine 320 each bind substrate.

This sequence belongs to the uroporphyrinogen decarboxylase family. In terms of assembly, homodimer.

The protein localises to the cytoplasm. It carries out the reaction uroporphyrinogen III + 4 H(+) = coproporphyrinogen III + 4 CO2. It participates in porphyrin-containing compound metabolism; protoporphyrin-IX biosynthesis; coproporphyrinogen-III from 5-aminolevulinate: step 4/4. Its function is as follows. Catalyzes the decarboxylation of four acetate groups of uroporphyrinogen-III to yield coproporphyrinogen-III. The chain is Uroporphyrinogen decarboxylase from Bacillus cereus (strain B4264).